Reading from the N-terminus, the 388-residue chain is Succinate--CoA ligase [ADP-forming] subunit beta (388 aa).

Positions 9-244 (KEILRKYNVP…LDEEDANEIE (236 aa)) constitute an ATP-grasp domain. Residues lysine 46, 53–55 (GRG), glutamate 99, alanine 102, and glutamate 107 contribute to the ATP site. Mg(2+)-binding residues include asparagine 199 and aspartate 213. Substrate-binding positions include asparagine 264 and 321–323 (GIM).

It belongs to the succinate/malate CoA ligase beta subunit family. Heterotetramer of two alpha and two beta subunits. Mg(2+) serves as cofactor.

It catalyses the reaction succinate + ATP + CoA = succinyl-CoA + ADP + phosphate. The enzyme catalyses GTP + succinate + CoA = succinyl-CoA + GDP + phosphate. Its pathway is carbohydrate metabolism; tricarboxylic acid cycle; succinate from succinyl-CoA (ligase route): step 1/1. Its function is as follows. Succinyl-CoA synthetase functions in the citric acid cycle (TCA), coupling the hydrolysis of succinyl-CoA to the synthesis of either ATP or GTP and thus represents the only step of substrate-level phosphorylation in the TCA. The beta subunit provides nucleotide specificity of the enzyme and binds the substrate succinate, while the binding sites for coenzyme A and phosphate are found in the alpha subunit. The protein is Succinate--CoA ligase [ADP-forming] subunit beta of Ralstonia nicotianae (strain ATCC BAA-1114 / GMI1000) (Ralstonia solanacearum).